The chain runs to 880 residues: A-adding tRNA nucleotidyltransferase (880 aa).

CBS domains follow at residues 315-373 (MSSP…NLPV) and 377-435 (MHTE…RNAE). Residue 487–490 (GFVR) participates in ATP binding. Mg(2+) is bound by residues D500 and D502. Residues 574-575 (RD), N579, 619-628 (DPTRVFRAIR), R632, and R661 each bind ATP.

Belongs to the tRNA nucleotidyltransferase/poly(A) polymerase family. The cofactor is Mg(2+).

It carries out the reaction a tRNA with a 3' CC end + ATP = a tRNA with a 3' CCA end + diphosphate. TRNA nucleotidyltransferase involved in the synthesis of the tRNA CCA terminus. Adds the terminal adenosine residue to tRNA. This chain is A-adding tRNA nucleotidyltransferase, found in Geobacter sulfurreducens (strain ATCC 51573 / DSM 12127 / PCA).